The following is a 241-amino-acid chain: Cell division cycle-associated protein 4 (241 aa).

The region spanning 30–77 (YSLQRQSLLDMSLVKLQLCHMLVEPNLCRSVLIANTVRQIQEEMTQDG) is the SERTA domain.

In terms of tissue distribution, highest levels of expression in the pancreas, thymus, testis, spleen, liver, placenta and leukocytes. Relatively low levels in the lung, kidney, prostate, ovary, small intestine and colon. Hardly detectable, if at all, in the brain, skeletal muscle and heart.

It localises to the nucleus. Functionally, may participate in the regulation of cell proliferation through the E2F/RB pathway. May be involved in molecular regulation of hematopoietic stem cells and progenitor cell lineage commitment and differentiation. This is Cell division cycle-associated protein 4 (CDCA4) from Homo sapiens (Human).